A 2063-amino-acid chain; its full sequence is Rho guanine nucleotide exchange factor 17 (2063 aa).

4 disordered regions span residues 22 to 365 (WSGG…MSDS), 380 to 466 (YLAS…SNPD), 485 to 581 (LRVR…AEED), and 602 to 958 (IQRM…RHVR). The span at 65 to 76 (PLAAPAQPRPLR) shows a compositional bias: low complexity. Over residues 87–96 (RRFDAPRLDD) the composition is skewed to basic and acidic residues. Positions 108–122 (PAAAEEAAEGPARGA) are enriched in low complexity. Residues S142 and S152 each carry the phosphoserine modification. Low complexity predominate over residues 225–250 (AGARASCSSSSIAASYPVSRSRAASS). At S310 the chain carries Phosphoserine. Over residues 313 to 323 (LNLSSMNSAGV) the composition is skewed to polar residues. 7 positions are modified to phosphoserine: S326, S332, S383, S387, S395, S410, and S420. Residues 388-397 (RGSSRYSSTE) show a composition bias toward polar residues. Positions 445-456 (ALRDGGFEPEKS) are enriched in basic and acidic residues. Phosphoserine occurs at positions 461 and 546. Low complexity predominate over residues 562 to 573 (SALKSSSSELLL). At S619 the chain carries Phosphoserine. Residues 671–680 (LSSSSAQTNH) show a composition bias toward polar residues. S696 bears the Phosphoserine mark. Phosphothreonine occurs at positions 699 and 702. Phosphoserine is present on S735. A compositionally biased stretch (polar residues) spans 754 to 765 (SVDSNLLGSLSP). Residues 827 to 836 (SLSDPSRRGE) are compositionally biased toward basic and acidic residues. The residue at position 914 (S914) is a Phosphoserine. The segment covering 917–928 (LIRRGSKKRPAR) has biased composition (basic residues). Over residues 930–939 (SHQELRRDEG) the composition is skewed to basic and acidic residues. 2 positions are modified to phosphoserine: S961 and S1002. The disordered stretch occupies residues 1034-1060 (APPSAEAKPPEAARPADEPTPASKCCS). The span at 1041–1050 (KPPEAARPAD) shows a compositional bias: basic and acidic residues. Residues 1066 to 1254 (MRKHVAMTLL…KQVAERINKG (189 aa)) form the DH domain. S1331 bears the Phosphoserine mark. 4 disordered regions span residues 1564-1584 (HREP…PAGP), 1616-1719 (GLEM…SSHG), 1991-2020 (TPPP…PAPA), and 2036-2055 (FRLS…DDST). Residues 1568 to 1582 (PPSLRSPPETAPEPA) are compositionally biased toward pro residues. Over residues 1644–1680 (SPSPSGTLQSQASRSTISSSFGNEETPSSKEATAETT) the composition is skewed to low complexity. The span at 2004–2013 (PSLEHRDSPW) shows a compositional bias: basic and acidic residues.

Highly expressed in the heart.

Its function is as follows. Acts as a guanine nucleotide exchange factor (GEF) for RhoA GTPases. This is Rho guanine nucleotide exchange factor 17 (ARHGEF17) from Homo sapiens (Human).